The chain runs to 79 residues: UPF0180 protein BCG9842_B3897 (79 aa).

It belongs to the UPF0180 family.

The polypeptide is UPF0180 protein BCG9842_B3897 (Bacillus cereus (strain G9842)).